The sequence spans 48 residues: ATP synthase protein 8 (48 aa).

A helical membrane pass occupies residues 4-24; sequence LVPFYFINILSFGFLIFTVLL.

Belongs to the ATPase protein 8 family. In terms of assembly, F-type ATPases have 2 components, CF(1) - the catalytic core - and CF(0) - the membrane proton channel.

The protein localises to the mitochondrion membrane. Its function is as follows. Mitochondrial membrane ATP synthase (F(1)F(0) ATP synthase or Complex V) produces ATP from ADP in the presence of a proton gradient across the membrane which is generated by electron transport complexes of the respiratory chain. F-type ATPases consist of two structural domains, F(1) - containing the extramembraneous catalytic core and F(0) - containing the membrane proton channel, linked together by a central stalk and a peripheral stalk. During catalysis, ATP synthesis in the catalytic domain of F(1) is coupled via a rotary mechanism of the central stalk subunits to proton translocation. Part of the complex F(0) domain. Minor subunit located with subunit a in the membrane. The protein is ATP synthase protein 8 (atp8) of Schizosaccharomyces pombe (strain 972 / ATCC 24843) (Fission yeast).